A 249-amino-acid chain; its full sequence is 23S rRNA (guanosine-2'-O-)-methyltransferase RlmB (249 aa).

The S-adenosyl-L-methionine site is built by Gly200, Ile220, and Leu229.

The protein belongs to the class IV-like SAM-binding methyltransferase superfamily. RNA methyltransferase TrmH family. RlmB subfamily.

It is found in the cytoplasm. It catalyses the reaction guanosine(2251) in 23S rRNA + S-adenosyl-L-methionine = 2'-O-methylguanosine(2251) in 23S rRNA + S-adenosyl-L-homocysteine + H(+). In terms of biological role, specifically methylates the ribose of guanosine 2251 in 23S rRNA. This is 23S rRNA (guanosine-2'-O-)-methyltransferase RlmB from Xanthomonas axonopodis pv. citri (strain 306).